The chain runs to 379 residues: RIB43A-like with coiled-coils protein 1 (379 aa).

Residues 1-21 are disordered; the sequence is MYNIKQSTDTKEAAAIEARRN. A compositionally biased stretch (basic and acidic residues) spans 8 to 21; sequence TDTKEAAAIEARRN. 2 coiled-coil regions span residues 82–111 and 216–304; these read KEEA…GREF and NANK…QAEK.

Belongs to the RIB43A family. Microtubule inner protein component of sperm flagellar doublet microtubules.

The protein resides in the cytoplasm. It is found in the cytoskeleton. The protein localises to the flagellum axoneme. This Homo sapiens (Human) protein is RIB43A-like with coiled-coils protein 1 (RIBC1).